Here is a 214-residue protein sequence, read N- to C-terminus: ATP-dependent Clp protease proteolytic subunit (214 aa).

The Nucleophile role is filled by S110. Residue H135 is part of the active site.

This sequence belongs to the peptidase S14 family. In terms of assembly, fourteen ClpP subunits assemble into 2 heptameric rings which stack back to back to give a disk-like structure with a central cavity, resembling the structure of eukaryotic proteasomes.

The protein resides in the cytoplasm. The catalysed reaction is Hydrolysis of proteins to small peptides in the presence of ATP and magnesium. alpha-casein is the usual test substrate. In the absence of ATP, only oligopeptides shorter than five residues are hydrolyzed (such as succinyl-Leu-Tyr-|-NHMec, and Leu-Tyr-Leu-|-Tyr-Trp, in which cleavage of the -Tyr-|-Leu- and -Tyr-|-Trp bonds also occurs).. Functionally, cleaves peptides in various proteins in a process that requires ATP hydrolysis. Has a chymotrypsin-like activity. Plays a major role in the degradation of misfolded proteins. The protein is ATP-dependent Clp protease proteolytic subunit of Legionella pneumophila (strain Paris).